The primary structure comprises 378 residues: Secreted LysM effector ldpA (378 aa).

An N-terminal signal peptide occupies residues 1–19; sequence MMKSIRFLASALALCLVDA. Over residues 118–131 the composition is skewed to low complexity; that stretch reads WTPPTTTTRSTSSS. Residues 118–139 are disordered; that stretch reads WTPPTTTTRSTSSSAGNGVTTP. Residues 152–198 enclose the LysM 1 domain; the sequence is RFYLVVSGDSCYDIAAAQGISLDNFYTWNPAVGSSCGGLWPDYYVCV. Residues 208–230 are disordered; it reads TTTTTTTPTTTSTTTTTAGNGVT. 2 LysM domains span residues 245–291 and 330–376; these read KFYQ…YVCV and KFYL…YVCV.

This sequence belongs to the secreted LysM effector family.

The protein resides in the secreted. It localises to the cell wall. Its subcellular location is the extracellular space. The protein localises to the extracellular matrix. Functionally, cell wall chitin of A.fumigatus recruits lung eosinophils during infection and ldpA might have a role in sequestration of chitin and act as triggers of host immunity to dampen host defense. This is Secreted LysM effector ldpA from Aspergillus fumigatus (strain ATCC MYA-4609 / CBS 101355 / FGSC A1100 / Af293) (Neosartorya fumigata).